The chain runs to 86 residues: Beta-mammal/insect toxin To1 (86 aa).

The N-terminal stretch at Met-1 to Cys-20 is a signal peptide. Residues Lys-22–Lys-84 form the LCN-type CS-alpha/beta domain. 4 cysteine pairs are disulfide-bonded: Cys-32–Cys-83, Cys-36–Cys-58, Cys-44–Cys-64, and Cys-48–Cys-66. Lys-84 is modified (lysine amide).

This sequence belongs to the long (4 C-C) scorpion toxin superfamily. Sodium channel inhibitor family. Beta subfamily. Expressed by the venom gland.

It is found in the secreted. Its function is as follows. Beta toxin that show multiple effects. It enhances the open probability at more negative potentials of human Nav1.3/SCN3A and Nav1.6/SCN8A, of the insect channel BgNaV1 and of arachnid VdNaV1 channel. It promotes an important shift in slow inactivation processes as a function of the prepulse voltage in human Nav1.3/SCN3A and Nav1.6/SCN8A and a small shift in Nav1.1/SCN1A, Nav1.2/SCN2A and Nav1.4/SCN4A. Finally, it reduces the peak of sodium currents in Nav1.3/SCN3A (80% inhibition at 70 nM of toxin), Nav1.6/SCN8A (55.3%), Nav1.1/SCN1A (53.3%), Nav1.5/SCN5A (46.7%), Nav1.2/SCN2A (42.7%) and Nav1.4/SCN4A (20%) voltage-gated sodium channels. It has also been shown to affect the sodium current permeability of rat cerebellum granular cells in a partially reversible manner. In vivo, an intraperitoneal injection (20 ug) into mice produces excitability, respiratory problems, convulsions and death, within the first 30 minutes after injection. The sequence is that of Beta-mammal/insect toxin To1 from Tityus obscurus (Amazonian scorpion).